A 126-amino-acid polypeptide reads, in one-letter code: UPF0325 protein PBPRA2971 (126 aa).

The protein belongs to the UPF0325 family.

This chain is UPF0325 protein PBPRA2971, found in Photobacterium profundum (strain SS9).